Consider the following 552-residue polypeptide: Glycosyltransferase family 92 protein RCOM_0530710 (552 aa).

Residues 12–34 form a helical; Signal-anchor membrane-spanning segment; the sequence is WNRFFWCTLLLVLSCVLFTASTF. The region spanning 277 to 520 is the GT92 domain; sequence KPHEMCICTM…GTRAVEPPDW (244 aa).

It belongs to the glycosyltransferase 92 family.

The protein localises to the membrane. The polypeptide is Glycosyltransferase family 92 protein RCOM_0530710 (Ricinus communis (Castor bean)).